We begin with the raw amino-acid sequence, 299 residues long: Fluorinase (299 aa).

Residues D16, 21 to 23 (DDS), Y77, S158, D210, N215, 269 to 270 (SR), and 277 to 279 (RNA) contribute to the S-adenosyl-L-methionine site.

As to quaternary structure, homohexamer; dimers of trimer.

The catalysed reaction is fluoride + S-adenosyl-L-methionine = 5'-deoxy-5'-fluoroadenosine + L-methionine. With respect to regulation, competitively inhibited by S-adenosyl-L-homocysteine (AdoHcy) and S-adenosyl-L-homocysteine (SAH). Sinefungin is only weakly inhibitory. Its function is as follows. Involved in the biosynthesis of fluorometabolites. Catalyzes the formation of a C-F bond by combining S-adenosyl-L-methionine (SAM) and fluoride to generate 5'-fluoro-5'-deoxyadenosine (5'-FDA) and L-methionine. It can also use 2'-deoxyadenosine in place of adenosine as substrate. The polypeptide is Fluorinase (Streptantibioticus cattleyicolor (Streptomyces cattleya)).